The sequence spans 240 residues: Pyridoxine 5'-phosphate synthase (240 aa).

Residue N7 participates in 3-amino-2-oxopropyl phosphate binding. Residue 9 to 10 (DH) coordinates 1-deoxy-D-xylulose 5-phosphate. R18 is a binding site for 3-amino-2-oxopropyl phosphate. H43 serves as the catalytic Proton acceptor. Residues R45 and H50 each coordinate 1-deoxy-D-xylulose 5-phosphate. E70 acts as the Proton acceptor in catalysis. T100 provides a ligand contact to 1-deoxy-D-xylulose 5-phosphate. The Proton donor role is filled by H191. 3-amino-2-oxopropyl phosphate-binding positions include G192 and 213–214 (GH).

This sequence belongs to the PNP synthase family. In terms of assembly, homooctamer; tetramer of dimers.

The protein resides in the cytoplasm. It carries out the reaction 3-amino-2-oxopropyl phosphate + 1-deoxy-D-xylulose 5-phosphate = pyridoxine 5'-phosphate + phosphate + 2 H2O + H(+). The protein operates within cofactor biosynthesis; pyridoxine 5'-phosphate biosynthesis; pyridoxine 5'-phosphate from D-erythrose 4-phosphate: step 5/5. In terms of biological role, catalyzes the complicated ring closure reaction between the two acyclic compounds 1-deoxy-D-xylulose-5-phosphate (DXP) and 3-amino-2-oxopropyl phosphate (1-amino-acetone-3-phosphate or AAP) to form pyridoxine 5'-phosphate (PNP) and inorganic phosphate. The chain is Pyridoxine 5'-phosphate synthase from Synechococcus elongatus (strain ATCC 33912 / PCC 7942 / FACHB-805) (Anacystis nidulans R2).